The chain runs to 229 residues: Large ribosomal subunit protein uL1 (229 aa).

It belongs to the universal ribosomal protein uL1 family. As to quaternary structure, part of the 50S ribosomal subunit.

Binds directly to 23S rRNA. The L1 stalk is quite mobile in the ribosome, and is involved in E site tRNA release. Functionally, protein L1 is also a translational repressor protein, it controls the translation of the L11 operon by binding to its mRNA. The chain is Large ribosomal subunit protein uL1 from Ureaplasma parvum serovar 3 (strain ATCC 27815 / 27 / NCTC 11736).